The sequence spans 464 residues: Protein FAM90A5 (464 aa).

Disordered regions lie at residues Arg16–Leu42, Pro70–Ala389, and His415–Pro437. 2 stretches are compositionally biased toward basic and acidic residues: residues Gly74–Val89 and Asn97–Arg114. A compositionally biased stretch (low complexity) spans Leu180–Leu197.

Belongs to the FAM90 family.

The polypeptide is Protein FAM90A5 (Homo sapiens (Human)).